Consider the following 553-residue polypeptide: Undecaprenyl phosphate-alpha-4-amino-4-deoxy-L-arabinose arabinosyl transferase (553 aa).

Transmembrane regions (helical) follow at residues 8–28, 83–103, 111–131, 132–152, 176–196, 204–224, 255–275, 288–308, 317–337, 350–370, 380–400, and 407–427; these read LVLL…RALW, VRFG…WLAF, VAVL…VGTY, AVLD…FWLG, VMTK…PWVI, VLLF…PWAL, APFW…VALL, IESG…FFSI, ILPC…QLVA, TVFG…WGIA, VLKV…GYLT, and LWQW…GMIP.

This sequence belongs to the glycosyltransferase 83 family.

The protein resides in the cell inner membrane. It catalyses the reaction 4-amino-4-deoxy-alpha-L-arabinopyranosyl di-trans,octa-cis-undecaprenyl phosphate + lipid IVA = lipid IIA + di-trans,octa-cis-undecaprenyl phosphate.. It functions in the pathway lipopolysaccharide metabolism; 4-amino-4-deoxy-beta-L-arabinose-lipid A biosynthesis. Catalyzes the transfer of the L-Ara4N moiety of the glycolipid undecaprenyl phosphate-alpha-L-Ara4N to lipid A. The modified arabinose is attached to lipid A and is required for resistance to polymyxin and cationic antimicrobial peptides. The sequence is that of Undecaprenyl phosphate-alpha-4-amino-4-deoxy-L-arabinose arabinosyl transferase from Enterobacter sp. (strain 638).